Here is a 732-residue protein sequence, read N- to C-terminus: Catalase-peroxidase (732 aa).

An N-terminal signal peptide occupies residues 1 to 45 (MDTKVDNAGKCPVVHTHTAHGGRSNRDWWPNQLNLRILHQNSSLS). The segment at residues 97–220 (WHSAGTYRTG…LSAVQMGLIY (124 aa)) is a cross-link (tryptophyl-tyrosyl-methioninium (Trp-Tyr) (with M-246)). The active-site Proton acceptor is the H98. A cross-link (tryptophyl-tyrosyl-methioninium (Tyr-Met) (with W-97)) is located at residues 220-246 (YVNPEGPNGNPDPLAAARDIRETFARM). H261 is a binding site for heme b.

This sequence belongs to the peroxidase family. Peroxidase/catalase subfamily. In terms of assembly, homodimer or homotetramer. Heme b serves as cofactor. In terms of processing, formation of the three residue Trp-Tyr-Met cross-link is important for the catalase, but not the peroxidase activity of the enzyme.

It carries out the reaction H2O2 + AH2 = A + 2 H2O. It catalyses the reaction 2 H2O2 = O2 + 2 H2O. Functionally, bifunctional enzyme with both catalase and broad-spectrum peroxidase activity. In Rhizobium rhizogenes (strain K84 / ATCC BAA-868) (Agrobacterium radiobacter), this protein is Catalase-peroxidase.